We begin with the raw amino-acid sequence, 1523 residues long: MPPLEVKPLAGYVRSQSLRIPSSLNLSGERTISTTEPTEGNDSSSEESGDNEQISTQRLISQNKRLQSAKFEALLSERADTLTGNSGRPTLDLPDAELSTASLVAKQDAGTGMLDPREYQVELFERAKSQNTIAVLDTGSGKTLIAVLLLKHIIQNELIDRANGKPPRISFFLVDSVTLAFQQAAVLRNNLDQNVAQFFGAMGTDLWSKQTWDHQFENNMVIVCTAEILNQCLLNSYIRMDQINLLIFDEAHHTKKDHPYARIIRESYLKADPTKRPRIFGMTASPIDTKGDIIESATKLEVLLDSKIATTSKPNLLREVVRRPIEESWEYDKLDPPFATKLYQILQARFGDISSLQPVFRFTLQASSELGPCCADRAWAYALADDVLPKLEGNVRKLAQSISSPIPQCALKEISRIQEASDIVKNHSFNSPNVPGELSPKVQLLRQKLIKYFEHPTKTKCIVFTQKRYTAKMLFDLFSTLEIPYLRPGVLIGVRSGDIVGMNVSFRQQFLALVKFRSGEINCLFATSVAEEGLDIPDCNLVVRFDLYNTLIQYVQSRGRARHSSSTYASMIERYNADHAARLVEVREAEKLMQSFCETLPEDRILHGIDSEIDSILQGEEEKRTFIIRATGAKLTYHSALAILARYASSLQYEKETSAQATYVVLPQNNSFVCEVILPEKSPVRGLTGVPASKKSAAKQSAAFDTCVLLRKHKLLDDHFNSVYHRRLPAMRNARLAITSSRTNQYDMLSKPSLWGKQQGTLPEKLFATVISFIPSEPLRRRHRSIILLTRERLPDFPSFTIFLDDDIETIVVTESVEEALHISSQELEYLSTFTFRIFHDVFHKTYAEEPEKLPYWVAPAETKKSKNVSDSKSLTDWELLHLVHENEEIPSTLHPSSEALINRFVFDPWDGRYRYFTMAIDNTLHPSDPPPSFLPRRKFMESIMSYTLSGSKNARAGFLSRCNWQQPVLEVELVRLRRNLLDKMTDTEKDVETRCFVCIEPLRISAIPEEIAASCLAFPAIINRLDAYLIALEGCKTLDLSVKPEYALEAFTKDSDNTEEHRVQQIHVQRGMGKNYERLEFLGDCFLKMATSISLFVQNPDDDEFDFHVNRMCLICNKNLFNTALKKELYQYTRSRGFSRHTWYPDGLTLLHGRDHRKKISAESKHALREKTVADVCEALIGASLLSGGLHNQFDMAVKAVTAVVDSPNHKALCWADYTSSYMLPKYQTQSPDGYELDLGRKVEEKLGYRFKYPRLLHSAFTHPSYPSTWAKVPCYQRLEFLGDSLLDMVCVDDLFYRYPDKDPQWLTEHKMAMVSNKFLGALAVKLGLHTHLRHFSNPLQSQITHYAEEIQAAENESQGAVDYWLVTKDPPKCLPDMVEAYLGAAFVDSDFQFRVVEDFFQRHVKSYFHDMTIYDTFANKHPTTFLQNRLTNEYGCTNYCLKAGEIPVVDGGTVSVLAAVIVHEVVIAEGTASSGRYAKVKASEKALSVLENMGPSEFREKYHCDCRTANGSQPMDIGTAI.

Residues 24–38 (LNLSGERTISTTEPT) show a composition bias toward polar residues. The segment at 24–58 (LNLSGERTISTTEPTEGNDSSSEESGDNEQISTQR) is disordered. The Helicase ATP-binding domain occupies 123–304 (LFERAKSQNT…ESATKLEVLL (182 aa)). An ATP-binding site is contributed by 136–143 (LDTGSGKT). The short motif at 249–252 (DEAH) is the DEAH box element. Residues 444–617 (LLRQKLIKYF…GIDSEIDSIL (174 aa)) form the Helicase C-terminal domain. The 91-residue stretch at 640–730 (ALAILARYAS…NSVYHRRLPA (91 aa)) folds into the Dicer dsRNA-binding fold domain. The PAZ domain occupies 879–1007 (ELLHLVHENE…VCIEPLRISA (129 aa)). RNase III domains lie at 1031 to 1190 (IALE…LSGG) and 1241 to 1392 (GRKV…VDSD). Mg(2+) is bound by residues Glu1281, Asp1378, and Glu1381. Residues 1426–1494 (TFLQNRLTNE…SEKALSVLEN (69 aa)) enclose the DRBM domain. Positions 1438, 1465, 1506, and 1508 each coordinate Zn(2+).

Belongs to the helicase family. Dicer subfamily. Mg(2+) serves as cofactor. It depends on Mn(2+) as a cofactor.

Dicer-like endonuclease involved in cleaving double-stranded RNA in the RNA interference (RNAi) pathway. Produces 21 to 25 bp dsRNAs (siRNAs) which target the selective destruction of homologous RNAs leading to sequence-specific suppression of gene expression, called post-transcriptional gene silencing (PTGS). Part of a broad host defense response against viral infection and transposons. The polypeptide is Dicer-like protein 1 (dcl1) (Aspergillus oryzae (strain ATCC 42149 / RIB 40) (Yellow koji mold)).